A 202-amino-acid polypeptide reads, in one-letter code: Protein cuti-1 (202 aa).

At 1–37 (MPNDRVAPLPPNFVYSPHDKFYYAPATCNSMHYTTAS) the chain is on the cytoplasmic side. The chain crosses the membrane as a helical span at residues 38–58 (YISAFIEFLVMGTGAICFYVM). Residues 59 to 68 (SHKSDSIGKW) lie on the Extracellular side of the membrane. A helical membrane pass occupies residues 69-89 (LFYIQAGITVLSLLTSALMAF). Residues 90–107 (GLWKENPQMLGSKLKFIE) lie on the Cytoplasmic side of the membrane. A helical transmembrane segment spans residues 108–128 (FIICFLLIWAVISIVCMAFGI). Over 129 to 148 (QFTRQVFGIFGKVHRIEQDY) the chain is Extracellular. Residues 149 to 169 (GPIWPFNIAVVSFFTAAIAIW) traverse the membrane as a helical segment. Residues 170 to 202 (TRIIIQGAADYLYDKAYFADKQNVELRESSKTR) lie on the Cytoplasmic side of the membrane.

As to quaternary structure, interacts with vps-39.

It localises to the cell membrane. The protein resides in the cytoplasm. Functionally, involved in cuticle formation and ensures cuticle shedding during larval development. Plays a role in maintaining the hypodermis. In association with vps-39, may play a role in vesicle tethering. This chain is Protein cuti-1, found in Caenorhabditis elegans.